A 50-amino-acid polypeptide reads, in one-letter code: Light-harvesting protein B-880 alpha chain (50 aa).

The Cytoplasmic segment spans residues 1–12; that stretch reads MYKLWLLFDPRR. The helical transmembrane segment at 13 to 33 threads the bilayer; that stretch reads ALVALSAFLFVLALIIHFIAL. His29 serves as a coordination point for a bacteriochlorophyll. Residues 34 to 50 are Periplasmic-facing; that stretch reads STDRFNWLEGKPAVKAA.

This sequence belongs to the antenna complex alpha subunit family. As to quaternary structure, the core complex is formed by different alpha and beta chains, binding bacteriochlorophyll molecules, and arranged most probably in tetrameric structures disposed around the reaction center. The non-pigmented gamma chains may constitute additional components.

Its subcellular location is the cell inner membrane. In terms of biological role, antenna complexes are light-harvesting systems, which transfer the excitation energy to the reaction centers. This Rhodoblastus acidophilus (Rhodopseudomonas acidophila) protein is Light-harvesting protein B-880 alpha chain.